We begin with the raw amino-acid sequence, 51 residues long: Ribosome biogenesis protein Nop10 (51 aa).

The protein belongs to the NOP10 family.

Functionally, involved in ribosome biogenesis; more specifically in 18S rRNA pseudouridylation and in cleavage of pre-rRNA. This Methanococcus maripaludis (strain C5 / ATCC BAA-1333) protein is Ribosome biogenesis protein Nop10.